A 238-amino-acid polypeptide reads, in one-letter code: Lipid transferase CIDEC (238 aa).

The interval 1-35 (MEYAMKSLSLLYPKSLSRHVSVRTSVVTQQLLSEP) is required for liquid-liquid phase separation (LLPS). The CIDE-N domain occupies 41 to 118 (RARPCRVSTA…VLQKGQKWQP (78 aa)).

This sequence belongs to the CIDE family. In terms of assembly, homodimer. Homooligomer; undergoes liquid-liquid phase separation (LLPS) via its N-terminus, facilitating lipid droplet fusion, occurs at the lipid droplet contact sites. Interacts with CIDEA. Interacts with PLIN1. Interacts with NFAT5; this interaction is direct and retains NFAT5 in the cytoplasm. Interacts with CEBPB. Interacts with isoform CLSTN3beta of CLSTN3; inhibiting the lipid transferase activity of CIDEC. Post-translationally, ubiquitinated and targeted to proteasomal degradation, resulting in a short half-life (about 15 minutes in 3T3-L1 cells). Protein stability depends on triaclyglycerol synthesis, fatty acid availability and lipid droplet formation. In terms of tissue distribution, expressed mainly in adipose tissue, small intestine, heart, colon and stomach and, at lower levels, in brain, kidney and liver.

It localises to the lipid droplet. Its subcellular location is the endoplasmic reticulum. The protein localises to the nucleus. It carries out the reaction a triacyl-sn-glycerol(in) = a triacyl-sn-glycerol(out). Functionally, lipid transferase specifically expressed in white adipose tissue, which promotes unilocular lipid droplet formation by mediating lipid droplet fusion. Lipid droplet fusion promotes their enlargement, restricting lipolysis and favoring lipid storage. Localizes on the lipid droplet surface, at focal contact sites between lipid droplets, and mediates atypical lipid droplet fusion by undergoing liquid-liquid phase separation (LLPS) and promoting directional net neutral lipid transfer from the smaller to larger lipid droplets. The transfer direction may be driven by the internal pressure difference between the contacting lipid droplet pair. Its role in neutral lipid transfer and lipid droplet enlargement is activated by the interaction with PLIN1. May also act as a CEBPB coactivator in the white adipose tissue to control the expression of a subset of CEBPB downstream target genes, including SOCS1, SOCS3, TGFB1, TGFBR1, ID2 and XDH. When overexpressed in preadipocytes, induces apoptosis or increases cell susceptibility to apoptosis induced by serum deprivation or TGFB treatment. The chain is Lipid transferase CIDEC from Homo sapiens (Human).